The chain runs to 459 residues: Exodeoxyribonuclease 7 large subunit (459 aa).

Belongs to the XseA family. As to quaternary structure, heterooligomer composed of large and small subunits.

The protein resides in the cytoplasm. The catalysed reaction is Exonucleolytic cleavage in either 5'- to 3'- or 3'- to 5'-direction to yield nucleoside 5'-phosphates.. Bidirectionally degrades single-stranded DNA into large acid-insoluble oligonucleotides, which are then degraded further into small acid-soluble oligonucleotides. The chain is Exodeoxyribonuclease 7 large subunit from Yersinia pestis bv. Antiqua (strain Antiqua).